Reading from the N-terminus, the 155-residue chain is Small ribosomal subunit protein uS7cz/uS7cy (155 aa).

It belongs to the universal ribosomal protein uS7 family. Part of the 30S ribosomal subunit.

The protein resides in the plastid. Its subcellular location is the chloroplast. Functionally, one of the primary rRNA binding proteins, it binds directly to 16S rRNA where it nucleates assembly of the head domain of the 30S subunit. The chain is Small ribosomal subunit protein uS7cz/uS7cy (rps7-A) from Morus indica (Mulberry).